A 97-amino-acid chain; its full sequence is Putative membrane protein insertion efficiency factor (97 aa).

This sequence belongs to the UPF0161 family.

The protein localises to the cell membrane. Its function is as follows. Could be involved in insertion of integral membrane proteins into the membrane. The sequence is that of Putative membrane protein insertion efficiency factor from Lactobacillus helveticus (strain DPC 4571).